The sequence spans 385 residues: uncharacterized protein (385 aa).

Zn(2+) contacts are provided by Asp-180, His-258, and His-275.

It belongs to the iron-containing alcohol dehydrogenase family. It depends on Zn(2+) as a cofactor.

This is an uncharacterized protein from Synechocystis sp. (strain ATCC 27184 / PCC 6803 / Kazusa).